A 242-amino-acid polypeptide reads, in one-letter code: MEKVSFGFSDVSPQEKTHLVGDVFRRVASRYDLMNDAMSGGLHRLWKDDFVRLVQPKASEHILDMAGGTGDIAFRLAKYGTNVTIADINPAMLEVGKKRAIARSIENLTWKEENAEALSFNDNVFDAYTIAFGIRNVTHIQKALDEAWRVLKVGGRFFCMEFSQTKWSGFSNLYKMYSTHIVPKIGQLLANDEDSYRYLIESIERFPNIEKFSDMIKSAGFVQIRARPILGGLVAIHSGWKV.

Residues threonine 69, aspartate 87, and 114–115 (NA) contribute to the S-adenosyl-L-methionine site.

Belongs to the class I-like SAM-binding methyltransferase superfamily. MenG/UbiE family.

It carries out the reaction a 2-demethylmenaquinol + S-adenosyl-L-methionine = a menaquinol + S-adenosyl-L-homocysteine + H(+). The enzyme catalyses a 2-methoxy-6-(all-trans-polyprenyl)benzene-1,4-diol + S-adenosyl-L-methionine = a 5-methoxy-2-methyl-3-(all-trans-polyprenyl)benzene-1,4-diol + S-adenosyl-L-homocysteine + H(+). The protein operates within quinol/quinone metabolism; menaquinone biosynthesis; menaquinol from 1,4-dihydroxy-2-naphthoate: step 2/2. It participates in cofactor biosynthesis; ubiquinone biosynthesis. In terms of biological role, methyltransferase required for the conversion of demethylmenaquinol (DMKH2) to menaquinol (MKH2) and the conversion of 2-polyprenyl-6-methoxy-1,4-benzoquinol (DDMQH2) to 2-polyprenyl-3-methyl-6-methoxy-1,4-benzoquinol (DMQH2). This Zymomonas mobilis subsp. mobilis (strain ATCC 31821 / ZM4 / CP4) protein is Ubiquinone/menaquinone biosynthesis C-methyltransferase UbiE.